The sequence spans 882 residues: Exo-beta-D-glucosaminidase ARB_07888 (882 aa).

The signal sequence occupies residues 1 to 21; that stretch reads MWFVFRPAAIPALLLTLGVSA. A propeptide spanning residues 22 to 31 is cleaved from the precursor; it reads LSPLRPLVST. 6 N-linked (GlcNAc...) asparagine glycosylation sites follow: Asn86, Asn200, Asn234, Asn237, Asn287, and Asn442. Residue Asp466 is the Proton donor of the active site. The active-site Nucleophile is the Glu538. Residues Asn688, Asn773, and Asn816 are each glycosylated (N-linked (GlcNAc...) asparagine).

Belongs to the glycosyl hydrolase 2 family. In terms of assembly, monomer.

It localises to the secreted. It carries out the reaction Hydrolysis of chitosan or chitosan oligosaccharides to remove successive D-glucosamine residues from the non-reducing termini.. Functionally, hydrolyzes chitosan and chitooligosaccharides with retention of anomeric configuration. This Arthroderma benhamiae (strain ATCC MYA-4681 / CBS 112371) (Trichophyton mentagrophytes) protein is Exo-beta-D-glucosaminidase ARB_07888.